The following is a 363-amino-acid chain: Peptide chain release factor 1 (363 aa).

Glutamine 237 bears the N5-methylglutamine mark.

This sequence belongs to the prokaryotic/mitochondrial release factor family. In terms of processing, methylated by PrmC. Methylation increases the termination efficiency of RF1.

It localises to the cytoplasm. In terms of biological role, peptide chain release factor 1 directs the termination of translation in response to the peptide chain termination codons UAG and UAA. The protein is Peptide chain release factor 1 (prfA) of Mycoplasma capricolum subsp. capricolum (strain California kid / ATCC 27343 / NCTC 10154).